A 512-amino-acid polypeptide reads, in one-letter code: Serine--tRNA ligase, cytoplasmic (512 aa).

N-acetylmethionine is present on methionine 1. The interaction with tRNA stretch occupies residues 9-61; it reads RVDKGGDPALIRETQEKRFKDPGLVDQLVKADSEWRRCRFRADNLNKLKNLCS. Residue serine 241 is modified to Phosphoserine. Positions 271 and 302 each coordinate L-serine. ATP contacts are provided by residues 302–304 and 318–321; these read RQE and VHQF. Residue lysine 323 is modified to N6-acetyllysine. Position 325 (glutamate 325) interacts with L-serine. 391–394 contributes to the ATP binding site; that stretch reads ELVS. Positions 427 and 429 each coordinate L-serine. The disordered stretch occupies residues 472-512; it reads KPAPIDQEPSKKQKKQHEGSKKKAKEVTLESQLQNMEVTEA. A compositionally biased stretch (basic and acidic residues) spans 479 to 499; sequence EPSKKQKKQHEGSKKKAKEVT. Positions 482 to 494 match the Nuclear localization signal motif; that stretch reads KKQKKQHEGSKKK. A compositionally biased stretch (polar residues) spans 500-512; sequence LESQLQNMEVTEA.

The protein belongs to the class-II aminoacyl-tRNA synthetase family. Type-1 seryl-tRNA synthetase subfamily. As to quaternary structure, homodimer. The tRNA molecule may bind across the dimer. Interacts with SIRT2. Interacts with METTL6; interaction is required for the tRNA N(3)-methylcytidine methyltransferase activity of METTL6.

It localises to the cytoplasm. The protein resides in the nucleus. It carries out the reaction tRNA(Ser) + L-serine + ATP = L-seryl-tRNA(Ser) + AMP + diphosphate + H(+). The enzyme catalyses tRNA(Sec) + L-serine + ATP = L-seryl-tRNA(Sec) + AMP + diphosphate + H(+). Its pathway is aminoacyl-tRNA biosynthesis; selenocysteinyl-tRNA(Sec) biosynthesis; L-seryl-tRNA(Sec) from L-serine and tRNA(Sec): step 1/1. In terms of biological role, catalyzes the attachment of serine to tRNA(Ser) in a two-step reaction: serine is first activated by ATP to form Ser-AMP and then transferred to the acceptor end of tRNA(Ser). Is probably also able to aminoacylate tRNA(Sec) with serine, to form the misacylated tRNA L-seryl-tRNA(Sec), which will be further converted into selenocysteinyl-tRNA(Sec). In the nucleus, binds to the VEGFA core promoter and prevents MYC binding and transcriptional activation by MYC. Recruits SIRT2 to the VEGFA promoter, promoting deacetylation of histone H4 at 'Lys-16' (H4K16). Thereby, inhibits the production of VEGFA and sprouting angiogenesis mediated by VEGFA. This Cricetulus griseus (Chinese hamster) protein is Serine--tRNA ligase, cytoplasmic (SARS1).